A 957-amino-acid chain; its full sequence is Glycine dehydrogenase (decarboxylating) (957 aa).

Lysine 708 is modified (N6-(pyridoxal phosphate)lysine).

Belongs to the GcvP family. In terms of assembly, the glycine cleavage system is composed of four proteins: P, T, L and H. The cofactor is pyridoxal 5'-phosphate.

The catalysed reaction is N(6)-[(R)-lipoyl]-L-lysyl-[glycine-cleavage complex H protein] + glycine + H(+) = N(6)-[(R)-S(8)-aminomethyldihydrolipoyl]-L-lysyl-[glycine-cleavage complex H protein] + CO2. Its function is as follows. The glycine cleavage system catalyzes the degradation of glycine. The P protein binds the alpha-amino group of glycine through its pyridoxal phosphate cofactor; CO(2) is released and the remaining methylamine moiety is then transferred to the lipoamide cofactor of the H protein. This chain is Glycine dehydrogenase (decarboxylating), found in Salmonella paratyphi B (strain ATCC BAA-1250 / SPB7).